Here is a 69-residue protein sequence, read N- to C-terminus: Large ribosomal subunit protein uL29 (69 aa).

It belongs to the universal ribosomal protein uL29 family.

This Polaromonas sp. (strain JS666 / ATCC BAA-500) protein is Large ribosomal subunit protein uL29.